The following is a 219-amino-acid chain: Cytochrome b6 (219 aa).

The helical transmembrane segment at 32–52 threads the bilayer; that stretch reads IFYCFGGIVLTAFIFQGASGF. Cys35 provides a ligand contact to heme c. His86 and His100 together coordinate heme b. The next 3 helical transmembrane spans lie at 90-110, 116-136, and 190-210; these read SGCM…TGGF, LTWI…VTGY, and IHTF…FSLL. Residues His191 and His206 each coordinate heme b.

This sequence belongs to the cytochrome b family. PetB subfamily. As to quaternary structure, the 4 large subunits of the cytochrome b6-f complex are cytochrome b6, subunit IV (17 kDa polypeptide, PetD), cytochrome f and the Rieske protein, while the 4 small subunits are PetG, PetL, PetM and PetN. The complex functions as a dimer. It depends on heme b as a cofactor. Heme c is required as a cofactor.

The protein resides in the plastid. It localises to the chloroplast thylakoid membrane. Its function is as follows. Component of the cytochrome b6-f complex, which mediates electron transfer between photosystem II (PSII) and photosystem I (PSI), cyclic electron flow around PSI, and state transitions. The protein is Cytochrome b6 of Heterocapsa triquetra (Dinoflagellate).